A 115-amino-acid chain; its full sequence is Large ribosomal subunit protein bL19 (115 aa).

This sequence belongs to the bacterial ribosomal protein bL19 family.

In terms of biological role, this protein is located at the 30S-50S ribosomal subunit interface and may play a role in the structure and function of the aminoacyl-tRNA binding site. This is Large ribosomal subunit protein bL19 from Escherichia coli O139:H28 (strain E24377A / ETEC).